A 416-amino-acid chain; its full sequence is Serine hydroxymethyltransferase (416 aa).

Residues leucine 117 and 121–123 each bind (6S)-5,6,7,8-tetrahydrofolate; that span reads GHL. Lysine 226 bears the N6-(pyridoxal phosphate)lysine mark.

It belongs to the SHMT family. Homodimer. It depends on pyridoxal 5'-phosphate as a cofactor.

It localises to the cytoplasm. The enzyme catalyses (6R)-5,10-methylene-5,6,7,8-tetrahydrofolate + glycine + H2O = (6S)-5,6,7,8-tetrahydrofolate + L-serine. It participates in one-carbon metabolism; tetrahydrofolate interconversion. The protein operates within amino-acid biosynthesis; glycine biosynthesis; glycine from L-serine: step 1/1. Functionally, catalyzes the reversible interconversion of serine and glycine with tetrahydrofolate (THF) serving as the one-carbon carrier. This reaction serves as the major source of one-carbon groups required for the biosynthesis of purines, thymidylate, methionine, and other important biomolecules. Also exhibits THF-independent aldolase activity toward beta-hydroxyamino acids, producing glycine and aldehydes, via a retro-aldol mechanism. This Leptospira biflexa serovar Patoc (strain Patoc 1 / Ames) protein is Serine hydroxymethyltransferase.